A 562-amino-acid polypeptide reads, in one-letter code: Bacillolysin (562 aa).

Positions 1-24 (MKKKKQALKVLLSVGILSSSFAFA) are cleaved as a signal peptide. Positions 25-245 (HTSSAAPNNV…KQAAKPAAKP (221 aa)) are cleaved as a propeptide — activation peptide. 3 residues coordinate Ca(2+): Asp303, Asp305, and Asp384. Position 388 (His388) interacts with Zn(2+). The active site involves Glu389. Zn(2+) is bound by residues His392 and Glu412. Glu423, Asn429, Asp431, Glu433, Glu436, Tyr439, Thr440, and Asp446 together coordinate Ca(2+). The active-site Proton donor is the His477.

Belongs to the peptidase M4 family. The cofactor is Ca(2+). Zn(2+) serves as cofactor.

The protein resides in the secreted. It catalyses the reaction Similar, but not identical, to that of thermolysin.. In terms of biological role, extracellular zinc metalloprotease. This chain is Bacillolysin, found in Priestia megaterium (strain ATCC 14581 / DSM 32 / CCUG 1817 / JCM 2506 / NBRC 15308 / NCIMB 9376 / NCTC 10342 / NRRL B-14308 / VKM B-512 / Ford 19) (Bacillus megaterium).